The following is a 396-amino-acid chain: NASP-related protein sim3 (396 aa).

A disordered region spans residues 1 to 31 (MSSDTKTLENSKGNSATDADTKNPSSSDSRA). TPR repeat units lie at residues 32–65 (IEQLVTQGNMAYAQKNYEEAVDKYGQALMQSESI) and 89–122 (IENSQVLGNALGAKESVSQATESFEEPEAIGSFT). The disordered stretch occupies residues 135 to 164 (NEENSSIAHPEKESEEKETNEASPASEEDE). The segment covering 143 to 154 (HPEKESEEKETN) has biased composition (basic and acidic residues). The TPR 3 repeat unit spans residues 199–232 (ADIYDLLGELSLEIENFSQASQDLKTALEWKEKV). Residues 267 to 329 (CEHVEKAAEI…QKTLDLKHGA (63 aa)) adopt a coiled-coil conformation. Basic and acidic residues predominate over residues 284-301 (RENEVTDKKGKGKQKAEE). Disordered regions lie at residues 284–307 (RENEVTDKKGKGKQKAEESTLTSD) and 334–396 (EAVM…KKKD). The span at 343–353 (SSLLSKDSSSL) shows a compositional bias: low complexity.

This sequence belongs to the NASP family. Interacts with cnp1, hht1, hht2 and hht3; has a preference for CENP-A (cnp1) over histone H3 (hht1/2/3).

It is found in the nucleus. In terms of biological role, histone H3 and H3-like CENP-A-specific chaperone. Promotes delivery and incorporation of CENP-A in centromeric chromatin, probably by escorting nascent CENP-A to CENP-A chromatin assembly factors. Required for central core silencing and normal chromosome segregation. The chain is NASP-related protein sim3 (sim3) from Schizosaccharomyces pombe (strain 972 / ATCC 24843) (Fission yeast).